The sequence spans 749 residues: Chitin synthase G (749 aa).

The next 5 membrane-spanning stretches (helical) occupy residues 40–60, 73–93, 421–441, 451–471, and 483–503; these read CVGE…PLPP, VLQW…WLFC, FMQN…ISII, PVGF…YFGI, and LMFI…IFTA. Positions 683–749 are disordered; sequence IESGSGIPSG…RRYMQPEQMV (67 aa). Residues 697–718 show a composition bias toward polar residues; it reads LSSSVPQSGMQQSRAVPGNMSQ. The N-linked (GlcNAc...) asparagine glycan is linked to Asn-715. The segment covering 728–742 has biased composition (basic residues); it reads YTKRPSRIPRQKRRY.

Belongs to the chitin synthase family. Class VI subfamily.

It is found in the cell membrane. It carries out the reaction [(1-&gt;4)-N-acetyl-beta-D-glucosaminyl](n) + UDP-N-acetyl-alpha-D-glucosamine = [(1-&gt;4)-N-acetyl-beta-D-glucosaminyl](n+1) + UDP + H(+). Polymerizes chitin, a structural polymer of the cell wall and septum, by transferring the sugar moiety of UDP-GlcNAc to the non-reducing end of the growing chitin polymer. Plays an important role in septal growth or maintenance. Mediates colony spore formation. In Aspergillus niger (strain ATCC MYA-4892 / CBS 513.88 / FGSC A1513), this protein is Chitin synthase G.